The following is a 481-amino-acid chain: ATP synthase subunit beta, chloroplastic (481 aa).

161 to 168 serves as a coordination point for ATP; sequence GGAGVGKT.

The protein belongs to the ATPase alpha/beta chains family. As to quaternary structure, F-type ATPases have 2 components, CF(1) - the catalytic core - and CF(0) - the membrane proton channel. CF(1) has five subunits: alpha(3), beta(3), gamma(1), delta(1), epsilon(1). CF(0) has four main subunits: a(1), b(1), b'(1) and c(9-12).

Its subcellular location is the plastid. It is found in the chloroplast thylakoid membrane. The enzyme catalyses ATP + H2O + 4 H(+)(in) = ADP + phosphate + 5 H(+)(out). In terms of biological role, produces ATP from ADP in the presence of a proton gradient across the membrane. The catalytic sites are hosted primarily by the beta subunits. The chain is ATP synthase subunit beta, chloroplastic from Pylaiella littoralis (Seaweed).